Reading from the N-terminus, the 788-residue chain is ATP-dependent 6-phosphofructokinase, platelet type (788 aa).

Residue methionine 1 is modified to N-acetylmethionine. The tract at residues 1 to 399 (MSDQDSSTSS…NLNTYKRLAI (399 aa)) is N-terminal catalytic PFK domain 1. Residues serine 2, serine 6, serine 12, and serine 21 each carry the phosphoserine modification. Residues glycine 34, 97–98 (RC), and 127–130 (GDGS) each bind ATP. Aspartate 128 lines the Mg(2+) pocket. Serine 142 carries the post-translational modification Phosphoserine. Residues 173 to 175 (SID), arginine 210, 217 to 219 (MGR), glutamate 273, arginine 301, and 307 to 310 (HVQR) each bind substrate. The Proton acceptor role is filled by aspartate 175. Phosphoserine is present on serine 386. Lysine 395 is modified (N6-acetyllysine). Positions 400 to 411 (KEPDDKIPKSNC) are interdomain linker. The interval 412 to 788 (NVAIINVGAP…VHNHGELSAI (377 aa)) is C-terminal regulatory PFK domain 2. Arginine 481 contributes to the beta-D-fructose 2,6-bisphosphate binding site. Position 486 is an N6-acetyllysine (lysine 486). Beta-D-fructose 2,6-bisphosphate-binding positions include 538–542 (TVSNN), arginine 576, 583–585 (MGG), and glutamate 639. Serine 540 carries an O-linked (GlcNAc) serine glycan. A Phosphotyrosine modification is found at tyrosine 651. Residues arginine 665 and 671 to 674 (HMQQ) each bind beta-D-fructose 2,6-bisphosphate. Lysine 688 is modified (N6-acetyllysine). Residue arginine 744 participates in beta-D-fructose 2,6-bisphosphate binding.

It belongs to the phosphofructokinase type A (PFKA) family. ATP-dependent PFK group I subfamily. Eukaryotic two domain clade 'E' sub-subfamily. As to quaternary structure, homo- and heterotetramers. Phosphofructokinase (PFK) enzyme functions as a tetramer composed of different combinations of 3 types of subunits, called PFKM (M), PFKL (L) and PFKP (P). The composition of the PFK tetramer differs according to the tissue type it is present in. The kinetic and regulatory properties of the tetrameric enzyme are dependent on the subunit composition, hence can vary across tissues. Interacts with ATG4B; promoting phosphorylation of ATG4B. The cofactor is Mg(2+). Post-translationally, glcNAcylation decreases enzyme activity. In terms of processing, phosphorylation at Ser-386 promotes interaction with ATG4B. In terms of tissue distribution, expressed at high level in neuroendocrine tissues.

It localises to the cytoplasm. It catalyses the reaction beta-D-fructose 6-phosphate + ATP = beta-D-fructose 1,6-bisphosphate + ADP + H(+). The protein operates within carbohydrate degradation; glycolysis; D-glyceraldehyde 3-phosphate and glycerone phosphate from D-glucose: step 3/4. Its activity is regulated as follows. Allosterically activated by ADP, AMP, or fructose 2,6-bisphosphate, and allosterically inhibited by ATP or citrate. In terms of biological role, catalyzes the phosphorylation of D-fructose 6-phosphate to fructose 1,6-bisphosphate by ATP, the first committing step of glycolysis. This chain is ATP-dependent 6-phosphofructokinase, platelet type (Pfkp), found in Rattus norvegicus (Rat).